Consider the following 118-residue polypeptide: Small ribosomal subunit protein bS6 (118 aa).

The protein belongs to the bacterial ribosomal protein bS6 family.

Functionally, binds together with bS18 to 16S ribosomal RNA. The sequence is that of Small ribosomal subunit protein bS6 from Saccharopolyspora erythraea (strain ATCC 11635 / DSM 40517 / JCM 4748 / NBRC 13426 / NCIMB 8594 / NRRL 2338).